Reading from the N-terminus, the 167-residue chain is Ubiquitin-fold modifier-conjugating enzyme 1 (167 aa).

Catalysis depends on cysteine 116, which acts as the Glycyl thioester intermediate. Lysine 122 participates in a covalent cross-link: Glycyl lysine isopeptide (Lys-Gly) (interchain with G-Cter in UFM1).

Belongs to the ubiquitin-conjugating enzyme family. UFC1 subfamily. As to quaternary structure, interacts with UBA5 (via C-terminus). Interacts with UFL1. Interacts with UFM1. Interacts with KIRREL3. In terms of processing, ufmylated at Lys-122. Deufmylated by UFSP1.

Its function is as follows. E2-like enzyme which specifically catalyzes the second step in ufmylation. Accepts the ubiquitin-like modifier UFM1 from the E1 enzyme UBA5 and forms an intermediate with UFM1 via a thioester linkage. Ufmylation is involved in various processes, such as ribosome recycling, response to DNA damage, interferon response or reticulophagy (also called ER-phagy). The chain is Ubiquitin-fold modifier-conjugating enzyme 1 from Bos taurus (Bovine).